The primary structure comprises 130 residues: Protein ApaG (130 aa).

The 125-residue stretch at 3–127 folds into the ApaG domain; the sequence is KAETRGITVT…FSLDSPHLRR (125 aa).

This Methylorubrum populi (strain ATCC BAA-705 / NCIMB 13946 / BJ001) (Methylobacterium populi) protein is Protein ApaG.